The primary structure comprises 348 residues: MLTKRQLLVLKEIIRLFTESGQPVGSKTLMQELPVHVSSATIRNDMAALEDAGLITKTHSSSGRVPSTQGYRYYLDHLVEPVRVSRHDLATIKQELGQRYSKMDEIVAQSVQILSNLTSYTAISLGPEVNNIKLTGFRLVPLGNHQVMAILVTNNGNVENQVFTVPPSISSDELEKAIRIVNDQLVGLPLVQVAQRLRTDVPSMLMQYLTSPDGFLDIFGNVLKSAASERFYVGGRLNLMDYLGDSDIHELKKIMSLIDADHGDLTELLGGPIRQTPVQVRLGPELKPIDLANLSLITASYDVGGHGTGMIALLGPTQMPYSKMIGLLDVFREELAKRLTDYYANFDQ.

Belongs to the HrcA family.

In terms of biological role, negative regulator of class I heat shock genes (grpE-dnaK-dnaJ and groELS operons). Prevents heat-shock induction of these operons. This is Heat-inducible transcription repressor HrcA from Lacticaseibacillus casei (strain BL23) (Lactobacillus casei).